The following is a 120-amino-acid chain: NAD(P)H-quinone oxidoreductase subunit 3, chloroplastic (120 aa).

3 consecutive transmembrane segments (helical) span residues 9 to 29, 64 to 84, and 88 to 108; these read IFWT…WISG, MFAL…PWAM, and VLGV…VVGL.

Belongs to the complex I subunit 3 family. As to quaternary structure, NDH is composed of at least 16 different subunits, 5 of which are encoded in the nucleus.

It localises to the plastid. The protein localises to the chloroplast thylakoid membrane. It catalyses the reaction a plastoquinone + NADH + (n+1) H(+)(in) = a plastoquinol + NAD(+) + n H(+)(out). It carries out the reaction a plastoquinone + NADPH + (n+1) H(+)(in) = a plastoquinol + NADP(+) + n H(+)(out). Its function is as follows. NDH shuttles electrons from NAD(P)H:plastoquinone, via FMN and iron-sulfur (Fe-S) centers, to quinones in the photosynthetic chain and possibly in a chloroplast respiratory chain. The immediate electron acceptor for the enzyme in this species is believed to be plastoquinone. Couples the redox reaction to proton translocation, and thus conserves the redox energy in a proton gradient. In Lolium perenne (Perennial ryegrass), this protein is NAD(P)H-quinone oxidoreductase subunit 3, chloroplastic.